We begin with the raw amino-acid sequence, 393 residues long: tRNA(Met) cytidine acetate ligase (393 aa).

ATP contacts are provided by Gly-81, Asn-142, and Arg-167.

Belongs to the TmcAL family.

The protein localises to the cytoplasm. The catalysed reaction is cytidine(34) in elongator tRNA(Met) + acetate + ATP = N(4)-acetylcytidine(34) in elongator tRNA(Met) + AMP + diphosphate. Catalyzes the formation of N(4)-acetylcytidine (ac(4)C) at the wobble position of elongator tRNA(Met), using acetate and ATP as substrates. First activates an acetate ion to form acetyladenylate (Ac-AMP) and then transfers the acetyl group to tRNA to form ac(4)C34. This is tRNA(Met) cytidine acetate ligase from Bacillus cereus (strain ZK / E33L).